Here is a 661-residue protein sequence, read N- to C-terminus: Ubiquitin carboxyl-terminal hydrolase 51 (661 aa).

A disordered region spans residues 1–144 (MRGTQGAQEM…SENSLLEVGS (144 aa)). Over residues 21 to 30 (TSENLTSRGS) the composition is skewed to polar residues. Residues 53 to 71 (PRRKPRPRPQPRSRSRGGR) show a composition bias toward basic residues. The segment covering 75-96 (APPPPPAKPPPPPPAPPPPPLP) has biased composition (pro residues). Residues 149 to 267 (TGCCHVESFK…KETKEKILGL (119 aa)) form a UBP-type zinc finger. Residues C151, H153, C192, C195, C205, C208, C213, H218, H222, H228, C241, and C244 each coordinate Zn(2+). The USP domain occupies 320-656 (RGLINLGNTC…EGYLLFYHRQ (337 aa)). The active-site Nucleophile is C329. H615 functions as the Proton acceptor in the catalytic mechanism.

Belongs to the peptidase C19 family. As to quaternary structure, interacts with H2A.

The protein resides in the chromosome. It carries out the reaction Thiol-dependent hydrolysis of ester, thioester, amide, peptide and isopeptide bonds formed by the C-terminal Gly of ubiquitin (a 76-residue protein attached to proteins as an intracellular targeting signal).. Functionally, specifically deubiquitinates 'Lys-14' (H2AK13Ub) and 'Lys-16'(H2AK15Ub) of histone H2A regulating the DNA damage response at double-strand breaks (DSBs). USP51 is recruited to chromatin after DNA damage and regulates the dynamic assembly/disassembly of TP53BP1 and BRCA1. Functions in DNA double-strand break repair also by mediating the deubiquitination and subsequent stabilization of DGCR8, leading to the recruitment of DGCR8 binding partners to double strand breaks such as RNF168 or MDC1. In addition, promotes the deubiquitination and stabilization of the transcriptional repressor ZEB1. In Mus musculus (Mouse), this protein is Ubiquitin carboxyl-terminal hydrolase 51.